The primary structure comprises 582 residues: Sorting nexin-4 (582 aa).

A compositionally biased stretch (polar residues) spans 1 to 11 (MSSDDQFTSIQ). The disordered stretch occupies residues 1–111 (MSSDDQFTSI…VNQEPSSDSQ (111 aa)). 2 stretches are compositionally biased toward basic and acidic residues: residues 12–27 (WDRD…KVNK) and 35–54 (DEHH…KSNE). Residues 57–70 (NIQEDDETKDDNEP) show a composition bias toward acidic residues. Positions 116 to 249 (EINVVVTSPL…HLFVSDSADW (134 aa)) constitute a PX domain. Residues Arg171, Lys197, and Arg216 each contribute to the a 1,2-diacyl-sn-glycero-3-phospho-(1D-myo-inositol-3-phosphate) site. Coiled-coil stretches lie at residues 300–329 (SKHK…KLDK) and 494–529 (SSVT…TNKI).

Belongs to the sorting nexin family.

It is found in the cytoplasm. The protein localises to the cytosol. It localises to the preautophagosomal structure membrane. Its subcellular location is the endosome membrane. Sorting nexin, involved in the separation or division of vacuoles throughout the entire life cycle of the cells. Involved in retrieval of late-Golgi SNAREs from post-Golgi endosomes to the trans-Golgi network, for cytoplasm to vacuole transport (Cvt), and autophagy of large cargos including mitophagy, pexophagy and glycophagy. This chain is Sorting nexin-4 (SNX4), found in Debaryomyces hansenii (strain ATCC 36239 / CBS 767 / BCRC 21394 / JCM 1990 / NBRC 0083 / IGC 2968) (Yeast).